The sequence spans 335 residues: Interleukin-12 subunit beta (335 aa).

The first 22 residues, 1-22, serve as a signal peptide directing secretion; sequence MCPQKLTISWFAIVLLVSPLMA. The 84-residue stretch at 23-106 folds into the Ig-like C2-type domain; it reads MWELEKDVYV…LSHSHLLLHK (84 aa). A glycan (N-linked (GlcNAc...) asparagine) is linked at N47. A disulfide bond links C50 and C90. N-linked (GlcNAc...) asparagine glycans are attached at residues N122, N132, and N220. The Fibronectin type-III domain occupies 233–324; sequence PDPPKNLQMK…QDRYYNSSCS (92 aa).

The protein belongs to the IL-12B family. Heterodimer with IL12A; disulfide-linked. The heterodimer is known as interleukin IL-12. Heterodimer with IL23A; disulfide-linked. The heterodimer is known as interleukin IL-23. Also secreted as a monomer. Interacts with NBR1; this interaction promotes IL-12 secretion.

The protein resides in the secreted. Functionally, cytokine that can act as a growth factor for activated T and NK cells, enhance the lytic activity of NK/lymphokine-activated killer cells, and stimulate the production of IFN-gamma by resting PBMC. In terms of biological role, associates with IL23A to form the IL-23 interleukin, a heterodimeric cytokine which functions in innate and adaptive immunity. IL-23 may constitute with IL-17 an acute response to infection in peripheral tissues. IL-23 binds to a heterodimeric receptor complex composed of IL12RB1 and IL23R, activates the Jak-Stat signaling cascade, stimulates memory rather than naive T-cells and promotes production of pro-inflammatory cytokines. IL-23 induces autoimmune inflammation and thus may be responsible for autoimmune inflammatory diseases and may be important for tumorigenesis. This is Interleukin-12 subunit beta (Il12b) from Mus musculus (Mouse).